The following is a 263-amino-acid chain: uncharacterized protein (263 aa).

An ATP-binding site is contributed by 31–38 (GPTGSGKT).

This sequence belongs to the CbbQ/NirQ/NorQ/GpvN family.

This is an uncharacterized protein from Staphylococcus aureus (strain NCTC 8325 / PS 47).